The primary structure comprises 584 residues: Protein DENND6A (584 aa).

A disordered region spans residues 1–23; sequence MALWERGAGGAAEAGEDATEEPE. Residues 39-218 form the uDENN domain; it reads HCVCVVGFDL…KLRIPTYRDK (180 aa). In terms of domain architecture, cDENN spans 244–369; that stretch reads EVDLFRCFCP…VKVKKLKNLK (126 aa). One can recognise a dDENN domain in the interval 371-504; that stretch reads LDSKPGVYTS…RSRQKEMTQN (134 aa).

Belongs to the DENND6 family.

It localises to the recycling endosome. It is found in the cytoplasm. In terms of biological role, guanine nucleotide exchange factor (GEF) for RAB14. The chain is Protein DENND6A (DENND6A) from Gallus gallus (Chicken).